We begin with the raw amino-acid sequence, 451 residues long: Phenylalanine--tRNA ligase, mitochondrial (451 aa).

Substrate is bound by residues 157–160 (SAHQ), Arg179, 186–188 (QHY), and 193–195 (QLE). Lys202 is subject to N6-acetyllysine. Residues Glu287 and Phe312 each contribute to the substrate site. Residues 358 to 450 (SKYPAVFNDI…AVQLLGVEGR (93 aa)) form the FDX-ACB domain.

It belongs to the class-II aminoacyl-tRNA synthetase family. As to quaternary structure, monomer.

It localises to the mitochondrion matrix. The protein resides in the mitochondrion. The enzyme catalyses tRNA(Phe) + L-phenylalanine + ATP = L-phenylalanyl-tRNA(Phe) + AMP + diphosphate + H(+). Is responsible for the charging of tRNA(Phe) with phenylalanine in mitochondrial translation. To a lesser extent, also catalyzes direct attachment of m-Tyr (an oxidized version of Phe) to tRNA(Phe), thereby opening the way for delivery of the misacylated tRNA to the ribosome and incorporation of ROS-damaged amino acid into proteins. This Mus musculus (Mouse) protein is Phenylalanine--tRNA ligase, mitochondrial (Fars2).